A 150-amino-acid polypeptide reads, in one-letter code: Lipoprotein signal peptidase (150 aa).

A run of 3 helical transmembrane segments spans residues 8–28 (FYAL…LAHA), 58–78 (GFSW…GWFL), and 81–101 (TTGS…NVFD). Active-site residues include D116 and D132. A helical membrane pass occupies residues 126 to 146 (VVFNIADLFILAGVFGTFLFL).

This sequence belongs to the peptidase A8 family.

It is found in the cell membrane. The catalysed reaction is Release of signal peptides from bacterial membrane prolipoproteins. Hydrolyzes -Xaa-Yaa-Zaa-|-(S,diacylglyceryl)Cys-, in which Xaa is hydrophobic (preferably Leu), and Yaa (Ala or Ser) and Zaa (Gly or Ala) have small, neutral side chains.. It functions in the pathway protein modification; lipoprotein biosynthesis (signal peptide cleavage). This protein specifically catalyzes the removal of signal peptides from prolipoproteins. This chain is Lipoprotein signal peptidase, found in Tropheryma whipplei (strain Twist) (Whipple's bacillus).